We begin with the raw amino-acid sequence, 183 residues long: Translation initiation factor IF-3 (183 aa).

Belongs to the IF-3 family. As to quaternary structure, monomer.

The protein resides in the cytoplasm. In terms of biological role, IF-3 binds to the 30S ribosomal subunit and shifts the equilibrium between 70S ribosomes and their 50S and 30S subunits in favor of the free subunits, thus enhancing the availability of 30S subunits on which protein synthesis initiation begins. The chain is Translation initiation factor IF-3 from Pseudomonas putida (strain ATCC 700007 / DSM 6899 / JCM 31910 / BCRC 17059 / LMG 24140 / F1).